The primary structure comprises 318 residues: Acetylglutamate kinase (318 aa).

Substrate contacts are provided by residues 80–81, R102, and N203; that span reads GG.

It belongs to the acetylglutamate kinase family. ArgB subfamily.

The protein resides in the cytoplasm. It carries out the reaction N-acetyl-L-glutamate + ATP = N-acetyl-L-glutamyl 5-phosphate + ADP. Its pathway is amino-acid biosynthesis; L-arginine biosynthesis; N(2)-acetyl-L-ornithine from L-glutamate: step 2/4. Functionally, catalyzes the ATP-dependent phosphorylation of N-acetyl-L-glutamate. The sequence is that of Acetylglutamate kinase from Bifidobacterium adolescentis (strain ATCC 15703 / DSM 20083 / NCTC 11814 / E194a).